The primary structure comprises 340 residues: Guanine nucleotide-binding protein G(I)/G(S)/G(T) subunit beta-1 (340 aa).

Ser2 bears the N-acetylserine mark. Ser2 carries the phosphoserine modification. WD repeat units follow at residues 46–94 (RTRR…HAIP), 95–140 (LRSS…RELA), 141–181 (GHTG…TTFT), 182–223 (GHTG…QTFT), 224–267 (GHES…YSHD), 268–309 (NIIC…GVLA), and 310–340 (GHDNRVSCLGVTDDGMAVATGSWDSFLKIWN). Phosphohistidine is present on His266.

This sequence belongs to the WD repeat G protein beta family. G proteins are composed of 3 units, alpha, beta and gamma. The heterodimer formed by GNB1 and GNG2 interacts with ARHGEF5. The heterodimer formed by GNB1 and GNG2 interacts with GRK2. Forms a complex with GNAO1 and GNG3. Interacts with ARHGEF18 and RASD2. Forms complexes with TAS2R14 and G-proteins; these complexes play a role in the perception of bitterness. Component of the TAS2R14-GNAI1 complex, consisting of TAS2R14, GNAI1, GNB1 and GNG2. Component of the TAS2R14-GNAT3 complex, consisting of TAS2R14, GNAT3, GNB1 and GNG2. Component of the TAS2R14-GNAS2 complex, consisting of TAS2R14, GNAS2, GNB1 and GNG2. Post-translationally, phosphorylation at His-266 by NDKB contributes to G protein activation by increasing the high energetic phosphate transfer onto GDP.

In terms of biological role, guanine nucleotide-binding proteins (G proteins) are involved as a modulator or transducer in various transmembrane signaling systems. The beta and gamma chains are required for the GTPase activity, for replacement of GDP by GTP, and for G protein-effector interaction. In Cricetulus griseus (Chinese hamster), this protein is Guanine nucleotide-binding protein G(I)/G(S)/G(T) subunit beta-1 (GNB1).